We begin with the raw amino-acid sequence, 417 residues long: Snake venom metalloproteinase aculysin-1 (417 aa).

The first 20 residues, 1-20 (MIQVLLVTICLAAFPYQGSS), serve as a signal peptide directing secretion. Positions 21–189 (IMLESGKVND…KKPSWLNLTP (169 aa)) are excised as a propeptide. The Peptidase M12B domain maps to 197 to 392 (TSVNLQLIVD…KKPKCIHKKS (196 aa)). 3 cysteine pairs are disulfide-bonded: cysteine 308–cysteine 387, cysteine 349–cysteine 371, and cysteine 351–cysteine 354. Histidine 333 contacts Zn(2+). Glutamate 334 is a catalytic residue. Zn(2+) contacts are provided by histidine 337 and histidine 343. Residues 393–417 (LKTDTVSTSVSGNEPLDDNVDGFHA) constitute a propeptide that is removed on maturation. Residues 398 to 417 (VSTSVSGNEPLDDNVDGFHA) are disordered. Residues 407 to 417 (PLDDNVDGFHA) are compositionally biased toward acidic residues.

The protein belongs to the venom metalloproteinase (M12B) family. P-I subfamily. Monomer. Zn(2+) serves as cofactor. As to expression, expressed by the venom gland.

Its subcellular location is the secreted. In terms of biological role, this protein is an alkaline zinc metalloprotease from snake venom that possesses weak hemorrhagic activity. In Deinagkistrodon acutus (Hundred-pace snake), this protein is Snake venom metalloproteinase aculysin-1.